The chain runs to 320 residues: Cytochrome f (320 aa).

The N-terminal stretch at M1–A35 is a signal peptide. Heme-binding residues include F36, C56, C59, and H60. The chain crosses the membrane as a helical span at residues I286–L305.

This sequence belongs to the cytochrome f family. The 4 large subunits of the cytochrome b6-f complex are cytochrome b6, subunit IV (17 kDa polypeptide, petD), cytochrome f and the Rieske protein, while the 4 small subunits are PetG, PetL, PetM and PetN. The complex functions as a dimer. Heme serves as cofactor.

It is found in the plastid. Its subcellular location is the chloroplast thylakoid membrane. Its function is as follows. Component of the cytochrome b6-f complex, which mediates electron transfer between photosystem II (PSII) and photosystem I (PSI), cyclic electron flow around PSI, and state transitions. The chain is Cytochrome f (petA) from Marchantia polymorpha (Common liverwort).